Consider the following 927-residue polypeptide: Band 3 anion transport protein (927 aa).

Residue Met1 is modified to N-acetylmethionine. Residues 1 to 420 lie on the Cytoplasmic side of the membrane; sequence MGDMQDHEKV…LSDITDALSP (420 aa). Ser18 is modified (phosphoserine). Residues Tyr31 and Tyr56 each carry the phosphotyrosine modification. Positions 69 to 303 are globular; the sequence is SQVYVELQEL…LGRAAATLMT (235 aa). An interaction with ANK1 region spans residues 190–199; it reads AVLTRSGAPS. Phosphoserine is present on residues Ser199 and Ser222. The tract at residues 317 to 370 is dimerization arm; it reads RGELLSSLDSFLDCSLVLPPTEAPSEKALLNLVPVQKELLRKRYLPRPAKPDPN. The disordered stretch occupies residues 367–390; that stretch reads PDPNLYEALDGGKEGPGDEDDPLR. A Phosphotyrosine modification is found at Tyr372. The helical transmembrane segment at 421–444 threads the bilayer; it reads QVLAAVIFIYFAALSPAVTFGGLL. Residues 445 to 452 lie on the Extracellular side of the membrane; the sequence is GEKTRNLM. A helical transmembrane segment spans residues 453–473; it reads GVSELLISTAVQGILFALLGA. Topologically, residues 474 to 476 are cytoplasmic; it reads QPL. The chain crosses the membrane as a discontinuously helical span at residues 477–493; that stretch reads LVLGFSGPLLVFEEAFY. The Extracellular portion of the chain corresponds to 494-502; sequence SFCESNNLE. A helical membrane pass occupies residues 503–523; sequence YIVGRAWIGFWLILLVVLVVA. At 524–535 the chain is on the cytoplasmic side; that stretch reads FEGSFLVQYISR. A helical transmembrane segment spans residues 536-558; the sequence is YTQEIFSFLISLIFIYETFSKLI. The Extracellular portion of the chain corresponds to 559–586; sequence KIFQDYPLQESYAPVVMKPKPQGPVPNT. The chain crosses the membrane as a helical span at residues 587-607; sequence ALLSLVLMVGTFLLAMMLRKF. The Cytoplasmic segment spans residues 608-618; sequence KNSTYFPGKLR. Residues 619–639 form a helical membrane-spanning segment; that stretch reads RVIGDFGVPISILIMVLVDTF. Residues 640–679 are Extracellular-facing; it reads IKNTYTQKLSVPDGLKVSNSSARGWVIHPLGLYNHFPKWM. N-linked (GlcNAc...) asparagine glycosylation is present at Asn658. The chain crosses the membrane as a helical span at residues 680–700; it reads MFASVLPALLVFILIFLESQI. Over 701-716 the chain is Cytoplasmic; the sequence is TTLIVSKPERKMIKGS. A helical membrane pass occupies residues 717-735; the sequence is GFHLDLLLVVGMGGVAALF. A discontinuously helical membrane pass occupies residues 736 to 753; sequence GMPWLSATTVRSVTHANA. The Cytoplasmic portion of the chain corresponds to 754–776; sequence LTVMGKASGPGAAAQIQEVKEQR. 2 consecutive transmembrane segments (helical) span residues 777 to 797 and 798 to 816; these read ISGL…PILS and RIPL…ITSL. Residues 817-854 lie on the Cytoplasmic side of the membrane; sequence SGIQLFDRILLLFKPPKYHPDVPFVKRVKTWRMHLFTG. An intramembrane region (discontinuously helical) is located at residues 855–885; that stretch reads IQIICLAVLWVVKSTPASLALPFVLILTVPL. Cys859 carries S-palmitoyl cysteine lipidation. Over 886–927 the chain is Cytoplasmic; it reads RRLLLPLIFRELELQCLDGDDAKVTFDEAEGLDEYDEVPMPV. A Phosphotyrosine modification is found at Tyr920.

It belongs to the anion exchanger (TC 2.A.31) family. As to quaternary structure, a dimer in solution, but in its membrane environment, it exists primarily as a mixture of dimers and tetramers and spans the membrane asymmetrically. Component of the ankyrin-1 complex in the erythrocyte, composed of ANK1, RHCE, RHAG, SLC4A1, EPB42, GYPA, GYPB and AQP1. Interacts with STOM; this interaction positively regulates SLC4A1 activity. Interacts with GYPA; a GYPA monomer is bound at each end of the SLC4A1 dimer forming a heterotetramer. Three SLC4A1 dimers (Band 3-I, Band 3-II and Band 3-III) participates in the ankyrin-1 complex. Interacts (via the cytoplasmic domain) with EPB42; this interaction is mediated by the SLC4A1 Band 3-I dimer. Interacts (via the cytoplasmic domain) directly with ANK1; this interaction is mediated by the SLC4A1 Band 3-II and Band 3-III dimers. In terms of assembly, interacts with TMEM139. In terms of tissue distribution, kidney.

Its subcellular location is the cell membrane. The protein localises to the basolateral cell membrane. It catalyses the reaction hydrogencarbonate(in) + chloride(out) = hydrogencarbonate(out) + chloride(in). Functions both as a transporter that mediates electroneutral anion exchange across the cell membrane and as a structural protein. Component of the ankyrin-1 complex of the erythrocyte membrane; required for normal flexibility and stability of the erythrocyte membrane and for normal erythrocyte shape via the interactions of its cytoplasmic domain with cytoskeletal proteins, glycolytic enzymes, and hemoglobin. Functions as a transporter that mediates the 1:1 exchange of inorganic anions across the erythrocyte membrane. Mediates chloride-bicarbonate exchange in the kidney, and is required for normal acidification of the urine. The sequence is that of Band 3 anion transport protein from Rattus norvegicus (Rat).